The primary structure comprises 138 residues: Putative pre-16S rRNA nuclease (138 aa).

This sequence belongs to the YqgF nuclease family.

It is found in the cytoplasm. Its function is as follows. Could be a nuclease involved in processing of the 5'-end of pre-16S rRNA. The protein is Putative pre-16S rRNA nuclease of Mycoplasma genitalium (strain ATCC 33530 / DSM 19775 / NCTC 10195 / G37) (Mycoplasmoides genitalium).